Here is a 683-residue protein sequence, read N- to C-terminus: Cysteine-rich receptor-like protein kinase 28 (683 aa).

Residues 1 to 24 form the signal peptide; the sequence is MEHVRVIFFFFACVLKIVPFICLA. Residues 25 to 288 lie on the Extracellular side of the membrane; it reads QKDKYEFPPG…RTGKGKGGSK (264 aa). Gnk2-homologous domains follow at residues 32–136 and 142–251; these read PPGF…NMII and TTPT…TWRF. Residues N43, N47, N73, and N153 are each glycosylated (N-linked (GlcNAc...) asparagine). The disordered stretch occupies residues 263 to 283; that stretch reads PAIQPADSPTSAARTERTGKG. Residues 289–309 traverse the membrane as a helical segment; it reads VIVAIVIPIVFVALFAICLCL. At 310–683 the chain is on the cytoplasmic side; the sequence is LLKWKKNKSV…DVTVSELSPR (374 aa). The Protein kinase domain occupies 361 to 641; it reads FSPENELGRG…ALMLNSYSYT (281 aa). Residues 367 to 375 and K389 contribute to the ATP site; that span reads LGRGGFGSV. The residue at position 434 (Y434) is a Phosphotyrosine. The active-site Proton acceptor is D486. S490 carries the phosphoserine modification. The residue at position 528 (T528) is a Phosphothreonine. A Phosphotyrosine modification is found at Y536.

The protein belongs to the protein kinase superfamily. Ser/Thr protein kinase family. CRK subfamily.

It localises to the membrane. The catalysed reaction is L-seryl-[protein] + ATP = O-phospho-L-seryl-[protein] + ADP + H(+). The enzyme catalyses L-threonyl-[protein] + ATP = O-phospho-L-threonyl-[protein] + ADP + H(+). The sequence is that of Cysteine-rich receptor-like protein kinase 28 (CRK28) from Arabidopsis thaliana (Mouse-ear cress).